We begin with the raw amino-acid sequence, 275 residues long: Large ribosomal subunit protein uL2 (275 aa).

Over residues 35-49 (DSQSSTAGRNNNGRI) the composition is skewed to polar residues. Disordered regions lie at residues 35–59 (DSQSSTAGRNNNGRITTRHKGGGHK) and 224–275 (AMNP…RHKR). A compositionally biased stretch (basic residues) spans 50-59 (TTRHKGGGHK).

The protein belongs to the universal ribosomal protein uL2 family. In terms of assembly, part of the 50S ribosomal subunit. Forms a bridge to the 30S subunit in the 70S ribosome.

Functionally, one of the primary rRNA binding proteins. Required for association of the 30S and 50S subunits to form the 70S ribosome, for tRNA binding and peptide bond formation. It has been suggested to have peptidyltransferase activity; this is somewhat controversial. Makes several contacts with the 16S rRNA in the 70S ribosome. The protein is Large ribosomal subunit protein uL2 of Burkholderia orbicola (strain AU 1054).